A 160-amino-acid polypeptide reads, in one-letter code: Ribosomal RNA large subunit methyltransferase H (160 aa).

An S-adenosyl-L-methionine-binding site is contributed by G108.

This sequence belongs to the RNA methyltransferase RlmH family. In terms of assembly, homodimer.

The protein resides in the cytoplasm. The enzyme catalyses pseudouridine(1915) in 23S rRNA + S-adenosyl-L-methionine = N(3)-methylpseudouridine(1915) in 23S rRNA + S-adenosyl-L-homocysteine + H(+). Its function is as follows. Specifically methylates the pseudouridine at position 1915 (m3Psi1915) in 23S rRNA. This Rhodopseudomonas palustris (strain BisA53) protein is Ribosomal RNA large subunit methyltransferase H.